A 208-amino-acid chain; its full sequence is Uracil phosphoribosyltransferase (208 aa).

Residues arginine 78, arginine 103, and 130–138 (DPMLATGGS) each bind 5-phospho-alpha-D-ribose 1-diphosphate. Uracil-binding positions include isoleucine 193 and 198 to 200 (GDA). Residue aspartate 199 participates in 5-phospho-alpha-D-ribose 1-diphosphate binding.

This sequence belongs to the UPRTase family. The cofactor is Mg(2+).

The catalysed reaction is UMP + diphosphate = 5-phospho-alpha-D-ribose 1-diphosphate + uracil. It functions in the pathway pyrimidine metabolism; UMP biosynthesis via salvage pathway; UMP from uracil: step 1/1. Its activity is regulated as follows. Allosterically activated by GTP. Functionally, catalyzes the conversion of uracil and 5-phospho-alpha-D-ribose 1-diphosphate (PRPP) to UMP and diphosphate. The sequence is that of Uracil phosphoribosyltransferase from Pectobacterium atrosepticum (strain SCRI 1043 / ATCC BAA-672) (Erwinia carotovora subsp. atroseptica).